A 301-amino-acid chain; its full sequence is Probable 5-dehydro-4-deoxyglucarate dehydratase (301 aa).

Belongs to the DapA family.

The enzyme catalyses 5-dehydro-4-deoxy-D-glucarate + H(+) = 2,5-dioxopentanoate + CO2 + H2O. It participates in carbohydrate acid metabolism; D-glucarate degradation; 2,5-dioxopentanoate from D-glucarate: step 2/2. The protein is Probable 5-dehydro-4-deoxyglucarate dehydratase of Chelativorans sp. (strain BNC1).